The following is a 525-amino-acid chain: Cytochrome P450 750A1 (525 aa).

The chain crosses the membrane as a helical span at residues proline 13–leucine 33. Cysteine 465 serves as a coordination point for heme.

It belongs to the cytochrome P450 family. Requires heme as cofactor.

Its subcellular location is the membrane. This is Cytochrome P450 750A1 (CYP750A1) from Pinus taeda (Loblolly pine).